A 283-amino-acid polypeptide reads, in one-letter code: MSFTSRLKKELFIKAQNLVPQHQLSRVVGKVAASENPILKAAVIHAFKTKYGIDLSIAEQGNALKYKSFNDFFTRALKDGVRLVDENPDSIVSPADGAISQIGKITAGKVFQAKGQSFSVEKLIGDPQLAQPFQEGEFATVYLSPRDYHRVHMPFSGILTETLYVPGELFSVNQVTAENVPGLFARNERMVCLFDTELGRMAVVLVGAMIVAGIETVATGKVKPSGRIELQHHELKLEKGAELGRFYLGSTAIILFEKDKIEWEKRFKAESVVVMGERMGHTL.

Catalysis depends on charge relay system; for autoendoproteolytic cleavage activity residues Asp-96, His-152, and Ser-250. Ser-250 acts as the Schiff-base intermediate with substrate; via pyruvic acid; for decarboxylase activity in catalysis. At Ser-250 the chain carries Pyruvic acid (Ser); by autocatalysis.

This sequence belongs to the phosphatidylserine decarboxylase family. PSD-B subfamily. Prokaryotic type I sub-subfamily. As to quaternary structure, heterodimer of a large membrane-associated beta subunit and a small pyruvoyl-containing alpha subunit. It depends on pyruvate as a cofactor. Post-translationally, is synthesized initially as an inactive proenzyme. Formation of the active enzyme involves a self-maturation process in which the active site pyruvoyl group is generated from an internal serine residue via an autocatalytic post-translational modification. Two non-identical subunits are generated from the proenzyme in this reaction, and the pyruvate is formed at the N-terminus of the alpha chain, which is derived from the carboxyl end of the proenzyme. The autoendoproteolytic cleavage occurs by a canonical serine protease mechanism, in which the side chain hydroxyl group of the serine supplies its oxygen atom to form the C-terminus of the beta chain, while the remainder of the serine residue undergoes an oxidative deamination to produce ammonia and the pyruvoyl prosthetic group on the alpha chain. During this reaction, the Ser that is part of the protease active site of the proenzyme becomes the pyruvoyl prosthetic group, which constitutes an essential element of the active site of the mature decarboxylase.

The protein localises to the cell membrane. It catalyses the reaction a 1,2-diacyl-sn-glycero-3-phospho-L-serine + H(+) = a 1,2-diacyl-sn-glycero-3-phosphoethanolamine + CO2. Its pathway is phospholipid metabolism; phosphatidylethanolamine biosynthesis; phosphatidylethanolamine from CDP-diacylglycerol: step 2/2. Catalyzes the formation of phosphatidylethanolamine (PtdEtn) from phosphatidylserine (PtdSer). The protein is Phosphatidylserine decarboxylase proenzyme of Acinetobacter baumannii (strain SDF).